A 432-amino-acid polypeptide reads, in one-letter code: MDRIRIVGGTPLKGTITIGGAKNAALALMPACLLTEETLALSNLPHLVDITTMANLLAQHGVTMALNGDAANGGHTGRVLELTAAHIGNTTAPYDLVRKMRASVLVLGPLLARFGEARVSLPGGCAIGTRPVDLHLKALEQMGAKIELDGGYIIASVQGRLKGAHVIFPQITVGGTENILMAATLAEGETVIANAAREPEITDLAECLVAMGAKIEGIGTGTLKVQGVERLHGAEYSVVPDRIETGTYAVAAAITRGDIELVGARFDLMESVNKVLTECGVHVEETPRGMRVRADQGEITGVDIMTEPYPGFPTDMQAQLMALMSTAKGASMITETIFENRFMHVPEMTRMGARINVHGSSAIVRGAPKLSGAQVMATDLRASVSLVLAALAAEGETIVNRVYHLDRGYERVEEKLAACGAKIERLKDGVAE.

Residue 22 to 23 coordinates phosphoenolpyruvate; that stretch reads KN. Arginine 101 is a UDP-N-acetyl-alpha-D-glucosamine binding site. Cysteine 125 functions as the Proton donor in the catalytic mechanism. Position 125 is a 2-(S-cysteinyl)pyruvic acid O-phosphothioketal (cysteine 125). Residues 130-134, aspartate 315, and isoleucine 337 each bind UDP-N-acetyl-alpha-D-glucosamine; that span reads RPVDL.

Belongs to the EPSP synthase family. MurA subfamily.

It is found in the cytoplasm. The enzyme catalyses phosphoenolpyruvate + UDP-N-acetyl-alpha-D-glucosamine = UDP-N-acetyl-3-O-(1-carboxyvinyl)-alpha-D-glucosamine + phosphate. The protein operates within cell wall biogenesis; peptidoglycan biosynthesis. Cell wall formation. Adds enolpyruvyl to UDP-N-acetylglucosamine. The chain is UDP-N-acetylglucosamine 1-carboxyvinyltransferase from Paramagnetospirillum magneticum (strain ATCC 700264 / AMB-1) (Magnetospirillum magneticum).